A 329-amino-acid chain; its full sequence is GTP 3',8-cyclase (329 aa).

Residues 1-229 (MNPVDYLRIS…ESTIKGNGPA (229 aa)) enclose the Radical SAM core domain. Residue Arg-8 coordinates GTP. Cys-15 and Cys-19 together coordinate [4Fe-4S] cluster. Residue Tyr-21 coordinates S-adenosyl-L-methionine. Cys-22 provides a ligand contact to [4Fe-4S] cluster. Arg-60 is a GTP binding site. Gly-64 is an S-adenosyl-L-methionine binding site. GTP is bound at residue Thr-91. Residue Ser-115 participates in S-adenosyl-L-methionine binding. Residue Lys-155 participates in GTP binding. Met-189 lines the S-adenosyl-L-methionine pocket. [4Fe-4S] cluster is bound by residues Cys-252 and Cys-255. Position 257-259 (257-259 (RMR)) interacts with GTP. Cys-269 provides a ligand contact to [4Fe-4S] cluster.

Belongs to the radical SAM superfamily. MoaA family. In terms of assembly, monomer and homodimer. Requires [4Fe-4S] cluster as cofactor.

It carries out the reaction GTP + AH2 + S-adenosyl-L-methionine = (8S)-3',8-cyclo-7,8-dihydroguanosine 5'-triphosphate + 5'-deoxyadenosine + L-methionine + A + H(+). Its pathway is cofactor biosynthesis; molybdopterin biosynthesis. In terms of biological role, catalyzes the cyclization of GTP to (8S)-3',8-cyclo-7,8-dihydroguanosine 5'-triphosphate. The protein is GTP 3',8-cyclase of Rippkaea orientalis (strain PCC 8801 / RF-1) (Cyanothece sp. (strain PCC 8801)).